A 506-amino-acid chain; its full sequence is Peptidyl-prolyl cis-trans isomerase CYP59 (506 aa).

Residues 1–161 (MSVLIVTSLG…KNIRIKHTHI (161 aa)) form the PPIase cyclophilin-type domain. The region spanning 243-321 (NVLFVCKLNP…RRIHVDFSQS (79 aa)) is the RRM domain. A CCHC-type zinc finger spans residues 341 to 357 (GCFKCGSTDHIAKDCVG). Composition is skewed to basic and acidic residues over residues 388-404 (ETPK…EKIQ) and 412-506 (GEGK…RRDR). Positions 388 to 506 (ETPKHNSHER…REARHERRDR (119 aa)) are disordered.

The protein belongs to the cyclophilin-type PPIase family. In terms of assembly, component of the BZR1 complex. Interacts with NRPB1 (via CTD domain), SCL28, SCL30, SCL30A, SCL33, SC35, SR30, SR34, RSZ21, RS2Z33, RS31 and RS40. In terms of tissue distribution, ubiquitous.

The protein localises to the nucleus. The enzyme catalyses [protein]-peptidylproline (omega=180) = [protein]-peptidylproline (omega=0). In terms of biological role, PPIases accelerate the folding of proteins. It catalyzes the cis-trans isomerization of proline imidic peptide bonds in oligopeptides. Influences somehow regulation of RNA pol II (CTD) phosphorylation. Binds RNA with preferences for GC-rich sequences. Probably involved in activities connecting transcription and pre-mRNA processing. Involved in brassinostroid response. This chain is Peptidyl-prolyl cis-trans isomerase CYP59 (CYP59), found in Arabidopsis thaliana (Mouse-ear cress).